The primary structure comprises 816 residues: Leucine--tRNA ligase (816 aa).

The 'HIGH' region signature appears at 40 to 51; that stretch reads SYPSGSQLHAGH. A 'KMSKS' region motif is present at residues 576–580; that stretch reads KMSKS. Lys579 contacts ATP.

The protein belongs to the class-I aminoacyl-tRNA synthetase family.

It is found in the cytoplasm. It catalyses the reaction tRNA(Leu) + L-leucine + ATP = L-leucyl-tRNA(Leu) + AMP + diphosphate. The sequence is that of Leucine--tRNA ligase from Clostridium perfringens (strain ATCC 13124 / DSM 756 / JCM 1290 / NCIMB 6125 / NCTC 8237 / Type A).